Consider the following 319-residue polypeptide: MPVTLSFGNRHNYEINHSRLARLMSPDKEEALYMGVWDRFKDCFRTHKKQEVLEVLYTLIHGCERENQAELNVDITGMEKIHAFTQLKEYANPSQQDRFVMRFDMNQTQVLFEIDGKVIDKCNLHRLLNVSENCIFKVMEEDEEELFLKICIKYGEKISRYPELLEGFANKLKDAVNEDDDVKDEVYKLMRSGEDRKMECVEWNGTLTEEEKNKLRCLQMGSFNITTQFFKIGYWELEGEVLFDMVHPTLSYLLQAYKPSLSSDLIETNTMLFSDVLNKDYDDYQNNKREIDAILRRIYRSHNNTLFISEKSSCRNMLI.

The Required to target late endocytic compartments signature appears at 37–44; the sequence is WDRFKDCF.

Belongs to the SopD family.

The protein resides in the secreted. It is found in the host cell membrane. Its function is as follows. Effector proteins function to alter host cell physiology and promote bacterial survival in host tissues. Contributes to the formation of Salmonella-induced filaments (Sifs) in infected epithelial cells and to replication in macrophages. This chain is Secreted effector protein sopD2 (sopD2), found in Salmonella typhimurium (strain LT2 / SGSC1412 / ATCC 700720).